A 254-amino-acid chain; its full sequence is NADPH-dependent ferric-chelate reductase (254 aa).

An FAD-binding FR-type domain is found at 15–136 (LRFRELTVLR…AGPRGSLVVP (122 aa)).

This sequence belongs to the SIP oxidoreductase family.

It is found in the cytoplasm. It catalyses the reaction 2 a Fe(II)-siderophore + NADP(+) + H(+) = 2 a Fe(III)-siderophore + NADPH. Plays a role in iron homeostasis under excess nickel conditions. In Escherichia coli (strain K12), this protein is NADPH-dependent ferric-chelate reductase (yqjH).